Reading from the N-terminus, the 298-residue chain is Aclacinomycin methylesterase RdmC (298 aa).

Residues 24–277 (PALLLVMGGN…LAEIPGMGHA (254 aa)) enclose the AB hydrolase-1 domain. Catalysis depends on residues Ser102, Asp248, and His276.

This sequence belongs to the AB hydrolase superfamily. Hydrolase RdmC family. In terms of assembly, monomer.

It carries out the reaction aclacinomycin T + H2O = 15-demethylaclacinomycin T + methanol. Its pathway is antibiotic biosynthesis; aclacinomycin biosynthesis. Its function is as follows. Involved in the biosynthesis of the anthracycline aclacinomycin which is an aromatic polyketide antibiotic that exhibits high cytotoxicity and is widely applied in the chemotherapy of a variety of cancers. Catalyzes the removal of the methoxy group from the C-15 position of aclacinomycin T and A to yield 15-demethoxyaclacinomycin T and A, respectively. This Streptomyces purpurascens protein is Aclacinomycin methylesterase RdmC (rdmC).